The following is a 261-amino-acid chain: Homeobox-leucine zipper protein HOX24 (261 aa).

Disordered regions lie at residues 42 to 67 and 160 to 188; these read AAAA…RKRR and KLNE…NSVM. Positions 46–61 are enriched in gly residues; that stretch reads GRGGGDGDGGGGGGGG. The homeobox DNA-binding region spans 61–121; the sequence is GGERKRRFTE…NKRARWRSKQ (61 aa). The interval 120 to 164 is leucine-zipper; the sequence is KQIEHDYAALRAQYDALHARVESLRQEKLALADQVDELRGKLNER.

The protein belongs to the HD-ZIP homeobox family. Class I subfamily. In terms of tissue distribution, expressed in roots and panicles.

The protein localises to the nucleus. In terms of biological role, probable transcription factor. The protein is Homeobox-leucine zipper protein HOX24 (HOX24) of Oryza sativa subsp. japonica (Rice).